The sequence spans 285 residues: Transcription initiation factor IIE subunit beta (285 aa).

Polar residues-rich tracts occupy residues 1–10 (MSSLSDQLSS) and 33–44 (TPTAYLNSNDGH). Positions 1 to 56 (MSSLSDQLSSFKKKVANQPIYAKPQPRQPASPTPTAYLNSNDGHSSAASSPGSYSL) are disordered. The span at 45–55 (SSAASSPGSYS) shows a compositional bias: low complexity. A DNA-binding region (TFIIE beta) is located at residues 67–142 (YSQPADSGVG…FTFKPLHNIR (76 aa)). The disordered stretch occupies residues 240–272 (PTSVDPSTVKRAGHNQTPKQKKPKTRRGKITNT). Residues 258-268 (KQKKPKTRRGK) are compositionally biased toward basic residues.

This sequence belongs to the TFIIE beta subunit family. In terms of assembly, TFIIE is a tetramer of two alpha (tfa1) and two beta (tfa2) subunits. TFIIE associates with RNA polymerase II via the beta subunit.

The protein resides in the nucleus. In terms of biological role, recruits TFIIH to the initiation complex and stimulates the RNA polymerase II C-terminal domain kinase and DNA-dependent ATPase activities of TFIIH. Both TFIIH and TFIIE are required for promoter clearance by RNA polymerase. The sequence is that of Transcription initiation factor IIE subunit beta (tfa2) from Schizosaccharomyces pombe (strain 972 / ATCC 24843) (Fission yeast).